The chain runs to 185 residues: Ubiquitin-conjugating enzyme E2 2 (185 aa).

A UBC core domain is found at Pro-4 to Leu-150. Cys-88 (glycyl thioester intermediate) is an active-site residue. A compositionally biased stretch (acidic residues) spans Trp-149–Ala-173. Positions Trp-149–Ala-185 are disordered.

It belongs to the ubiquitin-conjugating enzyme family.

Its subcellular location is the cytoplasm. The protein resides in the nucleus. It carries out the reaction S-ubiquitinyl-[E1 ubiquitin-activating enzyme]-L-cysteine + [E2 ubiquitin-conjugating enzyme]-L-cysteine = [E1 ubiquitin-activating enzyme]-L-cysteine + S-ubiquitinyl-[E2 ubiquitin-conjugating enzyme]-L-cysteine.. Its pathway is protein modification; protein ubiquitination. Functionally, catalyzes the covalent attachment of ubiquitin to other proteins. Plays a role in transcription regulation by catalyzing the monoubiquitination of histone H2B to form H2BK123ub1. H2BK123ub1 gives a specific tag for epigenetic transcriptional activation and is also a prerequisite for H3K4me and H3K79me formation. Also involved in postreplication repair of UV-damaged DNA, in N-end rule-dependent protein degradation and in sporulation. This Mycosarcoma maydis (Corn smut fungus) protein is Ubiquitin-conjugating enzyme E2 2 (UBC2).